A 337-amino-acid polypeptide reads, in one-letter code: Terpene cyclase (337 aa).

A helical membrane pass occupies residues 5–25; that stretch reads ASVIFLSLSVLAAVGVWGPFV. N-linked (GlcNAc...) asparagine glycosylation is present at Asn65. Transmembrane regions (helical) follow at residues 72–92, 111–131, 149–169, 177–197, 222–242, 267–287, and 298–318; these read IAYC…VILC, GLLS…MSFI, ALIL…LNVL, IWGI…ARII, VAGG…LGIF, LQVD…HELI, and LGGL…AAAW.

It belongs to the membrane-bound ascI terpene cyclase family.

It is found in the membrane. Its pathway is antifungal biosynthesis. Cyclase; part of the gene cluster that mediates the biosynthesis of the tetrahydropyranyl antifungal agent lanomycin that acts as an inhibitor of CYP51 and blocks the ergosterol biosynthesis. The biosynthesis probably begins with the formation of an hexaketide, followed by methionine mediated alkylation of C-2 and C-6, and methylation of the reduced C-3 oxygen, pyran forming reductive ring closure, oxygenation of C-4, beta-keto reduction, enoyl reduction and dehydration of the remaining oxygens, and finally, acylation with glycine to complete the biosynthesis. This chain is Terpene cyclase, found in Pyrenophora dematioidea (Helminthosporium dematioideum).